The chain runs to 155 residues: Small ribosomal subunit protein uS7cz/uS7cy (155 aa).

Belongs to the universal ribosomal protein uS7 family. In terms of assembly, part of the 30S ribosomal subunit.

The protein localises to the plastid. It localises to the chloroplast. In terms of biological role, one of the primary rRNA binding proteins, it binds directly to 16S rRNA where it nucleates assembly of the head domain of the 30S subunit. The polypeptide is Small ribosomal subunit protein uS7cz/uS7cy (rps7-A) (Pelargonium hortorum (Common geranium)).